We begin with the raw amino-acid sequence, 430 residues long: Serine--tRNA ligase (430 aa).

Residue 237–239 participates in L-serine binding; sequence TAE. 268–270 contributes to the ATP binding site; the sequence is RSE. Residue Glu291 coordinates L-serine. 355-358 is a binding site for ATP; it reads EISS. Ser391 serves as a coordination point for L-serine.

It belongs to the class-II aminoacyl-tRNA synthetase family. Type-1 seryl-tRNA synthetase subfamily. As to quaternary structure, homodimer. The tRNA molecule binds across the dimer.

The protein resides in the cytoplasm. It catalyses the reaction tRNA(Ser) + L-serine + ATP = L-seryl-tRNA(Ser) + AMP + diphosphate + H(+). The catalysed reaction is tRNA(Sec) + L-serine + ATP = L-seryl-tRNA(Sec) + AMP + diphosphate + H(+). It participates in aminoacyl-tRNA biosynthesis; selenocysteinyl-tRNA(Sec) biosynthesis; L-seryl-tRNA(Sec) from L-serine and tRNA(Sec): step 1/1. Functionally, catalyzes the attachment of serine to tRNA(Ser). Is also able to aminoacylate tRNA(Sec) with serine, to form the misacylated tRNA L-seryl-tRNA(Sec), which will be further converted into selenocysteinyl-tRNA(Sec). This is Serine--tRNA ligase from Salmonella heidelberg (strain SL476).